The chain runs to 215 residues: Large ribosomal subunit protein eL14 (215 aa).

Lys-79 is subject to N6-acetyllysine. N6-acetyllysine; alternate is present on Lys-85. The residue at position 85 (Lys-85) is an N6-succinyllysine; alternate. Lys-124 is covalently cross-linked (Glycyl lysine isopeptide (Lys-Gly) (interchain with G-Cter in SUMO2)). At Ser-139 the chain carries Phosphoserine. The segment at 161–215 is disordered; it reads VPAKKITAASKKAPAQKVPAQKATGQKAAPAPKAQKGQKAPAQKAPAPKASGKKA. Tandem repeats lie at residues 171-175, 176-180, 181-185, 186-190, 193-195, and 196-198. The interval 171–190 is 4 X 5 AA tandem repeats of Q-K-A-[PAS]-X; it reads KKAPAQKVPAQKATGQKAAP. The interval 193–198 is 2 X 3 AA tandem repeats of K-[GA]-Q; it reads KAQKGQ. At Lys-204 the chain carries N6-succinyllysine.

The protein belongs to the eukaryotic ribosomal protein eL14 family. In terms of assembly, component of the large ribosomal subunit.

Its subcellular location is the cytoplasm. Functionally, component of the large ribosomal subunit. The ribosome is a large ribonucleoprotein complex responsible for the synthesis of proteins in the cell. The chain is Large ribosomal subunit protein eL14 (RPL14) from Homo sapiens (Human).